The chain runs to 532 residues: Light-independent protochlorophyllide reductase subunit B (532 aa).

Residue Asp-36 participates in [4Fe-4S] cluster binding. Asp-292 acts as the Proton donor in catalysis. Residue 428 to 429 participates in substrate binding; it reads GL. The interval 445-486 is disordered; it reads EEEEPESISNGHAAAAGSEGGVPDSGEAGDAGDTDGMPWSPD.

It belongs to the ChlB/BchB/BchZ family. In terms of assembly, protochlorophyllide reductase is composed of three subunits; BchL, BchN and BchB. Forms a heterotetramer of two BchB and two BchN subunits. [4Fe-4S] cluster is required as a cofactor.

The enzyme catalyses chlorophyllide a + oxidized 2[4Fe-4S]-[ferredoxin] + 2 ADP + 2 phosphate = protochlorophyllide a + reduced 2[4Fe-4S]-[ferredoxin] + 2 ATP + 2 H2O. It functions in the pathway porphyrin-containing compound metabolism; bacteriochlorophyll biosynthesis (light-independent). Functionally, component of the dark-operative protochlorophyllide reductase (DPOR) that uses Mg-ATP and reduced ferredoxin to reduce ring D of protochlorophyllide (Pchlide) to form chlorophyllide a (Chlide). This reaction is light-independent. The NB-protein (BchN-BchB) is the catalytic component of the complex. This chain is Light-independent protochlorophyllide reductase subunit B, found in Chlorobium phaeobacteroides (strain BS1).